Consider the following 131-residue polypeptide: UPF0102 protein RALTA_A3032 (131 aa).

Positions 1-12 (MMRSFKSTQEPS) are enriched in polar residues. Positions 1 to 21 (MMRSFKSTQEPSRQARGAQAE) are disordered.

Belongs to the UPF0102 family.

This chain is UPF0102 protein RALTA_A3032, found in Cupriavidus taiwanensis (strain DSM 17343 / BCRC 17206 / CCUG 44338 / CIP 107171 / LMG 19424 / R1) (Ralstonia taiwanensis (strain LMG 19424)).